The sequence spans 192 residues: uncharacterized protein (192 aa).

Positions 29–160 constitute a Nudix hydrolase domain; the sequence is RRQAAVLIPV…PLDIYRRGDS (132 aa). Positions 67–89 match the Nudix box motif; it reads GAVDSSDASLIAAALREAQEEVA. Residues Glu83 and Glu87 each contribute to the Mg(2+) site.

It belongs to the Nudix hydrolase family. PCD1 subfamily. It depends on Mn(2+) as a cofactor. Mg(2+) is required as a cofactor.

In terms of biological role, probably mediates the hydrolysis of some nucleoside diphosphate derivatives. This is an uncharacterized protein from Citrobacter koseri (strain ATCC BAA-895 / CDC 4225-83 / SGSC4696).